The following is a 241-amino-acid chain: tRNA pseudouridine synthase A (241 aa).

The active-site Nucleophile is the aspartate 52. Residue tyrosine 111 coordinates substrate.

This sequence belongs to the tRNA pseudouridine synthase TruA family. In terms of assembly, homodimer.

It carries out the reaction uridine(38/39/40) in tRNA = pseudouridine(38/39/40) in tRNA. In terms of biological role, formation of pseudouridine at positions 38, 39 and 40 in the anticodon stem and loop of transfer RNAs. This is tRNA pseudouridine synthase A from Ureaplasma urealyticum serovar 10 (strain ATCC 33699 / Western).